We begin with the raw amino-acid sequence, 334 residues long: rRNA 2'-O-methyltransferase fibrillarin (334 aa).

The span at 1–93 (MEGRGGSRGG…GGKPAAGGKP (93 aa)) shows a compositional bias: gly residues. The tract at residues 1–94 (MEGRGGSRGG…GKPAAGGKPG (94 aa)) is disordered. S-adenosyl-L-methionine-binding positions include 184–185 (TT), 203–204 (EL), 228–229 (DA), and 248–251 (DVAQ).

It belongs to the methyltransferase superfamily. Fibrillarin family. Component of box C/D small nucleolar ribonucleoprotein (snoRNP) particles. It is associated with the U3, U8 and U13 small nuclear RNAs. Part of the small subunit (SSU) processome, composed of more than 70 proteins and the RNA chaperone small nucleolar RNA (snoRNA) U3. Post-translationally, by homology to other fibrillarins, some or all of the N-terminal domain arginines are modified to asymmetric dimethylarginine (DMA).

The protein resides in the nucleus. It is found in the nucleolus. The enzyme catalyses L-glutaminyl-[histone H2A] + S-adenosyl-L-methionine = N(5)-methyl-L-glutaminyl-[histone H2A] + S-adenosyl-L-homocysteine + H(+). In terms of biological role, S-adenosyl-L-methionine-dependent methyltransferase that has the ability to methylate both RNAs and proteins. Involved in pre-rRNA processing. Utilizes the methyl donor S-adenosyl-L-methionine to catalyze the site-specific 2'-hydroxyl methylation of ribose moieties in pre-ribosomal RNA. Site specificity is provided by a guide RNA that base pairs with the substrate. Methylation occurs at a characteristic distance from the sequence involved in base pairing with the guide RNA. Also acts as a protein methyltransferase by mediating methylation of 'Gln-105' of histone H2A (H2AQ105me), a modification that impairs binding of the FACT complex and is specifically present at 35S ribosomal DNA locus. Part of the small subunit (SSU) processome, first precursor of the small eukaryotic ribosomal subunit. During the assembly of the SSU processome in the nucleolus, many ribosome biogenesis factors, an RNA chaperone and ribosomal proteins associate with the nascent pre-rRNA and work in concert to generate RNA folding, modifications, rearrangements and cleavage as well as targeted degradation of pre-ribosomal RNA by the RNA exosome. The protein is rRNA 2'-O-methyltransferase fibrillarin (fbl) of Dictyostelium discoideum (Social amoeba).